Consider the following 301-residue polypeptide: Bifunctional protein FolD (301 aa).

NADP(+)-binding positions include 169–171 (GRS), Ser194, and Ile235.

This sequence belongs to the tetrahydrofolate dehydrogenase/cyclohydrolase family. In terms of assembly, homodimer.

It carries out the reaction (6R)-5,10-methylene-5,6,7,8-tetrahydrofolate + NADP(+) = (6R)-5,10-methenyltetrahydrofolate + NADPH. It catalyses the reaction (6R)-5,10-methenyltetrahydrofolate + H2O = (6R)-10-formyltetrahydrofolate + H(+). It participates in one-carbon metabolism; tetrahydrofolate interconversion. Functionally, catalyzes the oxidation of 5,10-methylenetetrahydrofolate to 5,10-methenyltetrahydrofolate and then the hydrolysis of 5,10-methenyltetrahydrofolate to 10-formyltetrahydrofolate. The protein is Bifunctional protein FolD of Gloeothece citriformis (strain PCC 7424) (Cyanothece sp. (strain PCC 7424)).